A 205-amino-acid polypeptide reads, in one-letter code: Putative 3-methyladenine DNA glycosylase (205 aa).

The protein belongs to the DNA glycosylase MPG family.

The chain is Putative 3-methyladenine DNA glycosylase from Clostridium perfringens (strain SM101 / Type A).